A 46-amino-acid polypeptide reads, in one-letter code: Escargot/snail protein homolog (46 aa).

3 consecutive C2H2-type zinc fingers follow at residues 1–4 (IRTH), 8–30 (CKCPICGKAFSRPWLLQGHTTHH), and 36–46 (FSCQHCNRAFA).

Belongs to the snail C2H2-type zinc-finger protein family.

It localises to the nucleus. In Oryzias latipes (Japanese rice fish), this protein is Escargot/snail protein homolog.